Consider the following 82-residue polypeptide: RNA-binding protein Hfq (82 aa).

A Sm domain is found at 11–71; the sequence is DTFLNSVRKS…ISTIMPAQPV (61 aa).

This sequence belongs to the Hfq family. In terms of assembly, homohexamer.

Functionally, RNA chaperone that binds small regulatory RNA (sRNAs) and mRNAs to facilitate mRNA translational regulation in response to envelope stress, environmental stress and changes in metabolite concentrations. Also binds with high specificity to tRNAs. The protein is RNA-binding protein Hfq of Caulobacter vibrioides (strain ATCC 19089 / CIP 103742 / CB 15) (Caulobacter crescentus).